The chain runs to 142 residues: Large ribosomal subunit protein uL16 (142 aa).

It belongs to the universal ribosomal protein uL16 family. In terms of assembly, part of the 50S ribosomal subunit.

Binds 23S rRNA and is also seen to make contacts with the A and possibly P site tRNAs. The sequence is that of Large ribosomal subunit protein uL16 from Trichormus variabilis (strain ATCC 29413 / PCC 7937) (Anabaena variabilis).